The sequence spans 453 residues: Tubulin alpha chain (453 aa).

Glutamine 11 contacts GTP. Lysine 40 carries the post-translational modification N6-acetyllysine. Residues glutamate 71, glycine 144, threonine 145, threonine 179, asparagine 206, and asparagine 228 each coordinate GTP. Residue glutamate 71 coordinates Mg(2+). Glutamate 254 is a catalytic residue.

It belongs to the tubulin family. In terms of assembly, dimer of alpha and beta chains. A typical microtubule is a hollow water-filled tube with an outer diameter of 25 nm and an inner diameter of 15 nM. Alpha-beta heterodimers associate head-to-tail to form protofilaments running lengthwise along the microtubule wall with the beta-tubulin subunit facing the microtubule plus end conferring a structural polarity. Microtubules usually have 13 protofilaments but different protofilament numbers can be found in some organisms and specialized cells. It depends on Mg(2+) as a cofactor. Undergoes a tyrosination/detyrosination cycle, the cyclic removal and re-addition of a C-terminal tyrosine residue by the enzymes tubulin tyrosine carboxypeptidase (TTCP) and tubulin tyrosine ligase (TTL), respectively. Post-translationally, acetylation of alpha chains at Lys-40 stabilizes microtubules and affects affinity and processivity of microtubule motors. This modification has a role in multiple cellular functions, ranging from cell motility, cell cycle progression or cell differentiation to intracellular trafficking and signaling.

The protein resides in the cytoplasm. It localises to the cytoskeleton. The enzyme catalyses GTP + H2O = GDP + phosphate + H(+). Tubulin is the major constituent of microtubules, a cylinder consisting of laterally associated linear protofilaments composed of alpha- and beta-tubulin heterodimers. Microtubules grow by the addition of GTP-tubulin dimers to the microtubule end, where a stabilizing cap forms. Below the cap, tubulin dimers are in GDP-bound state, owing to GTPase activity of alpha-tubulin. This Plasmodium falciparum (isolate K1 / Thailand) protein is Tubulin alpha chain.